The following is a 261-amino-acid chain: Proline-rich protein HaeIII subfamily 1 (261 aa).

An N-terminal signal peptide occupies residues 1 to 15 (MLVVLFTVALLALSS). Residues 15–261 (SAQGPREENQ…PPQGRPQGPR (247 aa)) form a disordered region. 2 stretches are compositionally biased toward pro residues: residues 32–44 (QRPPPSGFQPRPP) and 51–237 (GPPP…PPTG). Low complexity predominate over residues 238–261 (GPQQTPPLAGNTQGPPQGRPQGPR).

It is found in the secreted. The polypeptide is Proline-rich protein HaeIII subfamily 1 (Prh1) (Mus musculus (Mouse)).